The primary structure comprises 297 residues: Phosphoribosylaminoimidazole-succinocarboxamide synthase (297 aa).

This sequence belongs to the SAICAR synthetase family.

The enzyme catalyses 5-amino-1-(5-phospho-D-ribosyl)imidazole-4-carboxylate + L-aspartate + ATP = (2S)-2-[5-amino-1-(5-phospho-beta-D-ribosyl)imidazole-4-carboxamido]succinate + ADP + phosphate + 2 H(+). The protein operates within purine metabolism; IMP biosynthesis via de novo pathway; 5-amino-1-(5-phospho-D-ribosyl)imidazole-4-carboxamide from 5-amino-1-(5-phospho-D-ribosyl)imidazole-4-carboxylate: step 1/2. The polypeptide is Phosphoribosylaminoimidazole-succinocarboxamide synthase (Saccharopolyspora erythraea (strain ATCC 11635 / DSM 40517 / JCM 4748 / NBRC 13426 / NCIMB 8594 / NRRL 2338)).